We begin with the raw amino-acid sequence, 361 residues long: Phosphoserine aminotransferase (361 aa).

Arg-43 serves as a coordination point for L-glutamate. Residues 77–78, Trp-103, Thr-153, Asp-173, and Gln-196 each bind pyridoxal 5'-phosphate; that span reads AS. Lys-197 is subject to N6-(pyridoxal phosphate)lysine. 238–239 contacts pyridoxal 5'-phosphate; the sequence is NT.

The protein belongs to the class-V pyridoxal-phosphate-dependent aminotransferase family. SerC subfamily. As to quaternary structure, homodimer. It depends on pyridoxal 5'-phosphate as a cofactor.

The protein localises to the cytoplasm. The enzyme catalyses O-phospho-L-serine + 2-oxoglutarate = 3-phosphooxypyruvate + L-glutamate. It catalyses the reaction 4-(phosphooxy)-L-threonine + 2-oxoglutarate = (R)-3-hydroxy-2-oxo-4-phosphooxybutanoate + L-glutamate. It functions in the pathway amino-acid biosynthesis; L-serine biosynthesis; L-serine from 3-phospho-D-glycerate: step 2/3. It participates in cofactor biosynthesis; pyridoxine 5'-phosphate biosynthesis; pyridoxine 5'-phosphate from D-erythrose 4-phosphate: step 3/5. Functionally, catalyzes the reversible conversion of 3-phosphohydroxypyruvate to phosphoserine and of 3-hydroxy-2-oxo-4-phosphonooxybutanoate to phosphohydroxythreonine. This chain is Phosphoserine aminotransferase, found in Azotobacter vinelandii (strain DJ / ATCC BAA-1303).